Here is a 321-residue protein sequence, read N- to C-terminus: Transcriptional activator protein Pur-alpha (321 aa).

The tract at residues 1–54 (MADRDSGSEQGGAALGSGGSLGHPGSGSGSGGGGGGGGGGGGSGGGGGAPGGLQ) is disordered. At alanine 2 the chain carries N-acetylalanine. The span at 9–51 (EQGGAALGSGGSLGHPGSGSGSGGGGGGGGGGGGSGGGGGAPG) shows a compositional bias: gly residues. Residue serine 181 is modified to Phosphoserine. Residues 294 to 313 (LHQQQQQQQEETTAATLLLQ) are compositionally biased toward low complexity. Residues 294–321 (LHQQQQQQQEETTAATLLLQGEEEGEED) form a disordered region.

This sequence belongs to the PUR DNA-binding protein family. As to quaternary structure, homodimer, heterodimer with PURB and heterotrimer with PURB and YBX1/Y-box protein 1. Interacts with FMR1; this interaction occurs in association with polyribosome.

The protein resides in the nucleus. Its function is as follows. This is a probable transcription activator that specifically binds the purine-rich single strand of the PUR element located upstream of the c-Myc gene. May play a role in the initiation of DNA replication and in recombination. The polypeptide is Transcriptional activator protein Pur-alpha (Pura) (Mus musculus (Mouse)).